A 595-amino-acid polypeptide reads, in one-letter code: Elongation factor 4 (595 aa).

Positions 2–183 constitute a tr-type G domain; it reads KNIRNFCIIA…AIVEQVPAPA (182 aa). GTP is bound by residues 14–19 and 130–133; these read DHGKST and NKVD.

The protein belongs to the TRAFAC class translation factor GTPase superfamily. Classic translation factor GTPase family. LepA subfamily.

The protein resides in the cell inner membrane. It carries out the reaction GTP + H2O = GDP + phosphate + H(+). Its function is as follows. Required for accurate and efficient protein synthesis under certain stress conditions. May act as a fidelity factor of the translation reaction, by catalyzing a one-codon backward translocation of tRNAs on improperly translocated ribosomes. Back-translocation proceeds from a post-translocation (POST) complex to a pre-translocation (PRE) complex, thus giving elongation factor G a second chance to translocate the tRNAs correctly. Binds to ribosomes in a GTP-dependent manner. This chain is Elongation factor 4, found in Porphyromonas gingivalis (strain ATCC BAA-308 / W83).